The sequence spans 621 residues: E3 SUMO-protein ligase PIAS2 (621 aa).

The 35-residue stretch at 11–45 (VSSFRVSELQVLLGFAGRNKSGRKHDLLMRALHLL) folds into the SAP domain. The short motif at 19-23 (LQVLL) is the LXXLL motif element. Glycyl lysine isopeptide (Lys-Gly) (interchain with G-Cter in SUMO2) cross-links involve residues lysine 46 and lysine 249. A PINIT domain is found at 134 to 299 (QPSPPIPPVH…SMSVYLVRQL (166 aa)). The SP-RING-type zinc-finger motif lies at 331–412 (PDSEIATTSL…FMEILNDCSD (82 aa)). 4 residues coordinate Zn(2+): cysteine 362, histidine 364, cysteine 385, and cysteine 388. Glycyl lysine isopeptide (Lys-Gly) (interchain with G-Cter in SUMO2) cross-links involve residues lysine 430, lysine 435, lysine 443, and lysine 452. An SUMO1-binding region spans residues 467-473 (VDVIDLT). 3 positions are modified to phosphoserine: serine 476, serine 477, and serine 478. The short motif at 484 to 492 (PPAKRKCIF) is the Nuclear localization signal element. A Glycyl lysine isopeptide (Lys-Gly) (interchain with G-Cter in SUMO2) cross-link involves residue lysine 489. At serine 499 the chain carries Phosphoserine. Residues lysine 502 and glutamine 562 each participate in a glycyl lysine isopeptide (Lys-Gly) (interchain with G-Cter in SUMO2) cross-link. A compositionally biased stretch (low complexity) spans 579-610 (SSTSVTTTSSHESSTHVSSSSSRSETGVITSS). The interval 579–621 (SSTSVTTTSSHESSTHVSSSSSRSETGVITSSGSNIPDIISLD) is disordered.

Belongs to the PIAS family. As to quaternary structure, binds SUMO1 and UBE2I. Interacts with AXIN1, JUN, MDM2, PARK7, TP53 and TP73 isoform alpha, but not TP73 isoform beta. Interacts with STAT4 following IL12 and IFN-alpha stimulation of T-cells. Interacts also with GTF2I, GTF2IRD1, IKFZ1, DAB2 and MSX2, as well as with several steroid receptors, including ESR1, ESR2, NR3C1, PGR, AR, and with NCOA2. Sumoylation of a target protein seems to enhance the interaction. Binds to sumoylated ELK1. Binds DNA, such as CDKN1A promoter, in a sequence-specific manner. Interacts with PLAG1. Interacts with KLF8; the interaction results in SUMO ligation and repression of KLF8 transcriptional activity and of its cell cycle progression into G(1) phase. PIAS2-beta interacts with IFIH1/MDA5. Isoform PIAS2-alpha interacts with PML (isoform PML-12). Interacts with PRDM1/Blimp-1. Post-translationally, sumoylated. In terms of tissue distribution, mainly expressed in testis. Isoform 3 is expressed predominantly in adult testis, weakly in pancreas, embryonic testis and sperm, and at very low levels in other organs.

The protein resides in the nucleus speckle. It localises to the nucleus. The protein localises to the PML body. The protein operates within protein modification; protein sumoylation. Its function is as follows. Functions as an E3-type small ubiquitin-like modifier (SUMO) ligase, stabilizing the interaction between UBE2I and the substrate, and as a SUMO-tethering factor. Plays a crucial role as a transcriptional coregulator in various cellular pathways, including the STAT pathway, the p53 pathway and the steroid hormone signaling pathway. The effects of this transcriptional coregulation, transactivation or silencing may vary depending upon the biological context and the PIAS2 isoform studied. However, it seems to be mostly involved in gene silencing. Binds to sumoylated ELK1 and enhances its transcriptional activity by preventing recruitment of HDAC2 by ELK1, thus reversing SUMO-mediated repression of ELK1 transactivation activity. Isoform PIAS2-beta, but not isoform PIAS2-alpha, promotes MDM2 sumoylation. Isoform PIAS2-alpha promotes PARK7 sumoylation. Isoform PIAS2-beta promotes NCOA2 sumoylation more efficiently than isoform PIAS2-alpha. Isoform PIAS2-alpha sumoylates PML at'Lys-65' and 'Lys-160'. In Homo sapiens (Human), this protein is E3 SUMO-protein ligase PIAS2 (PIAS2).